Reading from the N-terminus, the 1249-residue chain is LRR receptor-like serine/threonine-protein kinase GSO1 (1249 aa).

An N-terminal signal peptide occupies residues 1-18; sequence MQPLVLLLLFILCFSGLG. Topologically, residues 19 to 876 are extracellular; sequence QPGIINNDLQ…QQGLSARSVV (858 aa). 2 N-linked (GlcNAc...) asparagine glycosylation sites follow: asparagine 77 and asparagine 117. LRR repeat units follow at residues 94 to 118, 119 to 142, 144 to 166, 168 to 190, 191 to 214, 216 to 238, 239 to 262, 264 to 285, 286 to 310, 312 to 334, 336 to 359, 360 to 383, 385 to 407, 408 to 431, 433 to 455, 457 to 479, 480 to 503, 505 to 527, 528 to 551, 553 to 574, 576 to 598, 599 to 622, 623 to 646, 648 to 670, 671 to 694, 696 to 718, 719 to 742, 744 to 766, 767 to 791, 792 to 815, and 817 to 838; these read FDNL…LSNL, TSLE…LGSL, NIRS…LGNL, NLQM…LGRL, VRVQ…LGNC, DLTV…LGRL, ENLE…LGEM, QLQY…SLAD, LGNL…FWNM, QLLD…ICSN, TNLE…LSKC, QSLK…LFEL, ELTD…ISNL, TNLQ…ISAL, KLEV…IGNC, SLKM…IGRL, KELN…LGNC, QLNI…FGFL, KGLE…LISL, NLTR…LCGS, SYLS…LGNS, QNLD…LGKI, RELS…LVLC, KLTH…LGKL, SQLG…LFNC, KLLV…IGNL, GALN…MGKL, KLYE…IGQL, QDLQ…IGTL, SKLE…VGDM, and SLGY…QFSR. 3 N-linked (GlcNAc...) asparagine glycosylation sites follow: asparagine 213, asparagine 228, and asparagine 248. 3 N-linked (GlcNAc...) asparagine glycosylation sites follow: asparagine 298, asparagine 309, and asparagine 334. Residues asparagine 369, asparagine 393, and asparagine 406 are each glycosylated (N-linked (GlcNAc...) asparagine). Asparagine 454 carries an N-linked (GlcNAc...) asparagine glycan. Residues asparagine 537, asparagine 553, asparagine 558, and asparagine 565 are each glycosylated (N-linked (GlcNAc...) asparagine). N-linked (GlcNAc...) asparagine glycosylation is found at asparagine 693 and asparagine 708. A glycan (N-linked (GlcNAc...) asparagine) is linked at asparagine 779. Residue asparagine 822 is glycosylated (N-linked (GlcNAc...) asparagine). A helical membrane pass occupies residues 877–897; sequence IISAISALTAIGLMILVIALF. Residues 898 to 1249 lie on the Cytoplasmic side of the membrane; it reads FKQRHDFFKK…NNRTAGYKKL (352 aa). Threonine 948 is modified (phosphothreonine). Residues 951–1240 form the Protein kinase domain; the sequence is LSEEFMIGSG…ACDSLLHVYN (290 aa). ATP is bound by residues 957 to 965 and lysine 979; that span reads IGSGGSGKV. Phosphotyrosine is present on residues tyrosine 1027 and tyrosine 1071. Aspartate 1084 serves as the catalytic Proton acceptor. Phosphotyrosine is present on residues tyrosine 1129 and tyrosine 1136.

This sequence belongs to the protein kinase superfamily. Ser/Thr protein kinase family. In terms of assembly, interacts with CIF1 and CIF2. In terms of tissue distribution, mostly expressed in siliques, seeds, developing embryos and seedlings, detected in flower buds and roots, but not in leaves or stems.

The protein localises to the cell membrane. The catalysed reaction is L-seryl-[protein] + ATP = O-phospho-L-seryl-[protein] + ADP + H(+). It carries out the reaction L-threonyl-[protein] + ATP = O-phospho-L-threonyl-[protein] + ADP + H(+). Its function is as follows. Together with GSO2, receptor-like serine/threonine-kinase required during the development of the epidermal surface in embryos and cotyledons. In coordination with GSO2, regulates root growth through control of cell division and cell fate specification. Controls seedling root growth by modulating sucrose response after germination. Receptor of the peptide hormones CIF1 and CIF2 required for contiguous Casparian strip diffusion barrier formation in roots. Required for localizing CASP proteins into the Casparian strip following an uninterrupted, ring-like domain, to trigger endodermal differentiation and thus regulate potassium ion (K) homeostasis. Involved in the maintenance of water transport and root pressure. May also be involved in the regulation of suberin accumulation in the endodermis. The chain is LRR receptor-like serine/threonine-protein kinase GSO1 from Arabidopsis thaliana (Mouse-ear cress).